We begin with the raw amino-acid sequence, 429 residues long: MTSIAVVGSQWGDEGKGKITDFLGTTADLSVRANGGNNAGHTIDFDGKEFKMRLIPSGIFAAKLGAVISNGVVINPKVLLGELNNLEKSGIDTSNLKISNRAHIIMPYHIMQDTYEEEAKGNLKVGTTKNGIGPTYMDKASRIGIRVCDLIDPETFAEKLRFNLERKNALFTKVYGKPAMDFDEIYNEYVEYGKRIAKYVCDTSLYVNDALDRNEKVLFEGAQGIMLDIDQGTYPFVSSSNSVSGGIASGSGIGANRIKTVLGICKAYTTRVGAGPFPTELHDETGDKIRDIAHEYGTVTGRPRRVGWFDSVALRHAKRVAGINALSLNLLDVFSGFDKIKICVAYDLNGKQIDYYPASLKEVEACQPIYEELPAWEEDITGAKSWEDLPEKAQAFVKRISEITGIPVVTVSVGPDREQTIVLQDPWTL.

GTP is bound by residues 12–18 (GDEGKGK) and 40–42 (GHT). Aspartate 13 serves as the catalytic Proton acceptor. Positions 13 and 40 each coordinate Mg(2+). IMP-binding positions include 13–16 (DEGK), 38–41 (NAGH), threonine 128, arginine 142, glutamine 223, and arginine 302. The active-site Proton donor is the histidine 41. 298–304 (TVTGRPR) contributes to the substrate binding site. GTP is bound by residues arginine 304, 330–332 (LLD), and 412–414 (SVG).

Belongs to the adenylosuccinate synthetase family. In terms of assembly, homodimer. It depends on Mg(2+) as a cofactor.

The protein localises to the cytoplasm. The catalysed reaction is IMP + L-aspartate + GTP = N(6)-(1,2-dicarboxyethyl)-AMP + GDP + phosphate + 2 H(+). It participates in purine metabolism; AMP biosynthesis via de novo pathway; AMP from IMP: step 1/2. Plays an important role in the de novo pathway of purine nucleotide biosynthesis. Catalyzes the first committed step in the biosynthesis of AMP from IMP. This is Adenylosuccinate synthetase from Lactobacillus delbrueckii subsp. bulgaricus (strain ATCC 11842 / DSM 20081 / BCRC 10696 / JCM 1002 / NBRC 13953 / NCIMB 11778 / NCTC 12712 / WDCM 00102 / Lb 14).